Consider the following 397-residue polypeptide: Presenilin-like protein At2g29900 (397 aa).

Over 1–17 the chain is Cytoplasmic; the sequence is MDRNQRPRSILDSLGEE. Residues 18 to 38 form a helical membrane-spanning segment; that stretch reads LIAILTPVSICMFTVVLLVCI. The Lumenal portion of the chain corresponds to 39 to 76; sequence LNSDPSSSSASFSSIATAAYSESDSDSSWDKFVGALLN. A helical membrane pass occupies residues 77 to 97; sequence SVVFVAAITVATFVLVLLFYL. Over 98 to 106 the chain is Cytoplasmic; sequence RCVKFLKFY. Residues 107–127 traverse the membrane as a helical segment; sequence MGFSAFIVLGNLGGEILVLLI. Residues 128-135 are Lumenal-facing; it reads DRFRFPID. Residues 136–156 traverse the membrane as a helical segment; it reads SITFLILLFNFSVVGVFAVFM. The Cytoplasmic segment spans residues 157–158; the sequence is SK. A helical membrane pass occupies residues 159–179; sequence FSILITQGYLVWIGVLVAYFF. The Lumenal portion of the chain corresponds to 180-188; that stretch reads TLLPEWTTW. The helical transmembrane segment at 189–209 threads the bilayer; the sequence is VLLVALALYDIAAVLLPVGPL. Asp-198 is a catalytic residue. Residues 210–305 lie on the Cytoplasmic side of the membrane; the sequence is RLLVEMAISR…NSETFLEGIG (96 aa). The chain crosses the membrane as a helical span at residues 306–326; that stretch reads LGSSGAIKLGLGDFIFYSVLV. Asp-318 is a catalytic residue. Residues 327-336 lie on the Lumenal side of the membrane; the sequence is GRAAMYDLMT. The helical transmembrane segment at 337 to 357 threads the bilayer; the sequence is VYACYLAIIAGLGITLMLLSV. Over 358-366 the chain is Cytoplasmic; it reads YQKALPALP. Positions 363–365 match the PAL motif; sequence PAL. The helical intramembrane region spans 367–387; it reads VSIMLGVVFYFLARLLLEVFV. The Cytoplasmic segment spans residues 388 to 397; the sequence is VQCSSNLVMF.

It belongs to the peptidase A22A family. Homodimer. Probable component of the gamma-secretase complex, a complex composed of a presenilin homodimer, nicastrin, APH1 and PEN2.

Its subcellular location is the endoplasmic reticulum membrane. It localises to the golgi apparatus membrane. Its function is as follows. Probable subunit of the gamma-secretase complex, an endoprotease complex that catalyzes the intramembrane cleavage of integral membrane proteins such as Notch receptors. The polypeptide is Presenilin-like protein At2g29900 (Arabidopsis thaliana (Mouse-ear cress)).